The following is a 361-amino-acid chain: Divinyl chlorophyll a/b light-harvesting protein PcbD (361 aa).

6 consecutive transmembrane segments (helical) span residues phenylalanine 27–leucine 47, isoleucine 93–phenylalanine 113, phenylalanine 140–alanine 160, valine 201–valine 221, alanine 248–cysteine 268, and leucine 315–leucine 335.

Belongs to the PsbB/PsbC family. IsiA/Pcb subfamily. In terms of assembly, the antenna complex consists of divinyl chlorophylls (a and b) and divinyl chlorophyll a/b binding proteins and binds more divinyl chlorophyll b than does the antenna complex from high-light-adapted Prochlorococcus. The cofactor is divinyl chlorophyll a. Divinyl chlorophyll b serves as cofactor.

The protein resides in the cellular thylakoid membrane. Its function is as follows. The antenna complex functions as a light receptor, it captures and delivers excitation energy to photosystems II and I. The Prochlorales pcb genes are not related to higher plant LHCs. The sequence is that of Divinyl chlorophyll a/b light-harvesting protein PcbD (pcbD) from Prochlorococcus marinus (strain SARG / CCMP1375 / SS120).